Reading from the N-terminus, the 1863-residue chain is C-myc promoter-binding protein (1863 aa).

Residues Lys42–Val200 enclose the MABP domain. Residues Val192 to Pro364 enclose the uDENN domain. Residues Pro385–Asn521 enclose the cDENN domain. Positions Leu523–Ser641 constitute a dDENN domain. A Phosphoserine modification is found at Ser731. PPR repeat units follow at residues Trp772–Pro808 and Asp809–Pro843. Residues Asp905–Cys952 are disordered. Basic and acidic residues predominate over residues Ser912 to Thr921. The Bipartite nuclear localization signal signature appears at Arg917 to Lys933. The segment covering Asp936–Ser949 has biased composition (low complexity). 5 positions are modified to phosphoserine: Ser1015, Ser1035, Ser1099, Ser1151, and Ser1152. The disordered stretch occupies residues Thr1075–Leu1111. The interval Thr1177–Arg1202 is disordered. A phosphoserine mark is found at Ser1225, Ser1240, and Ser1251. Disordered stretches follow at residues Asn1237 to Phe1306 and Ser1348 to Asp1375. Residues Thr1269–Leu1279 are compositionally biased toward basic and acidic residues. The residue at position 1281 (Ser1281) is a Phosphoserine. 2 stretches are compositionally biased toward polar residues: residues Asp1297 to Phe1306 and Ser1348 to Leu1371. 4 positions are modified to phosphoserine: Ser1508, Ser1587, Ser1589, and Ser1591.

In terms of tissue distribution, expressed ubiquitously. Highest expression in bone marrow, medium in peripheral blood lymphocytes and lowest in spleen. In brain, breast, and prostate, higher expression was seen in normal cells than in tumor cells. Expression is regulated in a growth- and cell cycle-dependent manner.

Its subcellular location is the nucleus. In terms of biological role, probable guanine nucleotide exchange factor (GEF) which may activate RAB10. Promotes the exchange of GDP to GTP, converting inactive GDP-bound Rab proteins into their active GTP-bound form. According to PubMed:8056341, it may bind to ISRE-like element (interferon-stimulated response element) of MYC P2 promoter. This Homo sapiens (Human) protein is C-myc promoter-binding protein (DENND4A).